The following is a 228-amino-acid chain: Phosphoglycolate phosphatase (228 aa).

Aspartate 9 serves as the catalytic Nucleophile. Mg(2+)-binding residues include aspartate 9 and aspartate 11. Lysine 151 contacts substrate. Aspartate 174 and aspartate 178 together coordinate Mg(2+).

Belongs to the archaeal SPP-like hydrolase family. Requires Mg(2+) as cofactor.

The enzyme catalyses 2-phosphoglycolate + H2O = glycolate + phosphate. Catalyzes the dephosphorylation of 2-phosphoglycolate. This Pyrobaculum islandicum (strain DSM 4184 / JCM 9189 / GEO3) protein is Phosphoglycolate phosphatase.